The primary structure comprises 225 residues: PKHD-type hydroxylase YbiX (225 aa).

One can recognise a Fe2OG dioxygenase domain in the interval 78 to 177; the sequence is TLSTPLFNRY…RVASFMWIQS (100 aa). Residues His-96, Asp-98, and His-158 each contribute to the Fe cation site. Residue Arg-168 coordinates 2-oxoglutarate.

Fe(2+) is required as a cofactor. L-ascorbate serves as cofactor.

The protein is PKHD-type hydroxylase YbiX of Escherichia coli O6:H1 (strain CFT073 / ATCC 700928 / UPEC).